The chain runs to 335 residues: 1D-myo-inositol 2-acetamido-2-deoxy-alpha-D-glucopyranoside deacetylase (335 aa).

Residues His19, Asp22, and His158 each coordinate Zn(2+).

Belongs to the MshB deacetylase family. Zn(2+) is required as a cofactor.

It carries out the reaction 1D-myo-inositol 2-acetamido-2-deoxy-alpha-D-glucopyranoside + H2O = 1D-myo-inositol 2-amino-2-deoxy-alpha-D-glucopyranoside + acetate. Its function is as follows. Catalyzes the deacetylation of 1D-myo-inositol 2-acetamido-2-deoxy-alpha-D-glucopyranoside (GlcNAc-Ins) in the mycothiol biosynthesis pathway. This Corynebacterium urealyticum (strain ATCC 43042 / DSM 7109) protein is 1D-myo-inositol 2-acetamido-2-deoxy-alpha-D-glucopyranoside deacetylase.